Consider the following 353-residue polypeptide: tRNA N6-adenosine threonylcarbamoyltransferase (353 aa).

Fe cation contacts are provided by H115 and H119. Residues 138 to 142 (LVSGG), D171, G184, and N276 each bind substrate. D304 serves as a coordination point for Fe cation.

This sequence belongs to the KAE1 / TsaD family. Fe(2+) is required as a cofactor.

Its subcellular location is the cytoplasm. The enzyme catalyses L-threonylcarbamoyladenylate + adenosine(37) in tRNA = N(6)-L-threonylcarbamoyladenosine(37) in tRNA + AMP + H(+). Its function is as follows. Required for the formation of a threonylcarbamoyl group on adenosine at position 37 (t(6)A37) in tRNAs that read codons beginning with adenine. Is involved in the transfer of the threonylcarbamoyl moiety of threonylcarbamoyl-AMP (TC-AMP) to the N6 group of A37, together with TsaE and TsaB. TsaD likely plays a direct catalytic role in this reaction. This chain is tRNA N6-adenosine threonylcarbamoyltransferase, found in Xanthomonas euvesicatoria pv. vesicatoria (strain 85-10) (Xanthomonas campestris pv. vesicatoria).